We begin with the raw amino-acid sequence, 508 residues long: Lysine--tRNA ligase (508 aa).

The Mg(2+) site is built by Glu403 and Glu410.

It belongs to the class-II aminoacyl-tRNA synthetase family. As to quaternary structure, homodimer. Requires Mg(2+) as cofactor.

The protein localises to the cytoplasm. The enzyme catalyses tRNA(Lys) + L-lysine + ATP = L-lysyl-tRNA(Lys) + AMP + diphosphate. This chain is Lysine--tRNA ligase, found in Methanoculleus marisnigri (strain ATCC 35101 / DSM 1498 / JR1).